The following is a 175-amino-acid chain: MGKITFYEDRGFQGRCYECSSDCPNLQPYFSRCNSIRVDSGCWMLYERPNYQGHQYFLRRGDYPDYQQWLGFSDSIRSCRLIPQHSGTFRMRIYERDDFRGQMSEITDDCLSLQDRFHLNEIHSLNVLDGCWVLYEMPSYRGRQYLLRPGEYRRYLDWGAMNAKVGSLRRVMDFY.

2 consecutive Beta/gamma crystallin 'Greek key' domains span residues 2 to 40 (GKITFYEDRGFQGRCYECSSDCPNLQPYFSRCNSIRVDS) and 41 to 83 (GCWM…RLIP). Positions 84–88 (QHSGT) are connecting peptide. 2 consecutive Beta/gamma crystallin 'Greek key' domains span residues 89–129 (FRMR…NVLD) and 130–172 (GCWV…RRVM).

This sequence belongs to the beta/gamma-crystallin family. In terms of assembly, monomer.

Crystallins are the dominant structural components of the vertebrate eye lens. The protein is Gamma-crystallin B (CRYGB) of Canis lupus familiaris (Dog).